The chain runs to 159 residues: Ribosomal RNA large subunit methyltransferase H (159 aa).

Residues leucine 76, glycine 108, and 127 to 132 (FGRLTL) contribute to the S-adenosyl-L-methionine site.

It belongs to the RNA methyltransferase RlmH family. As to quaternary structure, homodimer.

It is found in the cytoplasm. The catalysed reaction is pseudouridine(1915) in 23S rRNA + S-adenosyl-L-methionine = N(3)-methylpseudouridine(1915) in 23S rRNA + S-adenosyl-L-homocysteine + H(+). Specifically methylates the pseudouridine at position 1915 (m3Psi1915) in 23S rRNA. The chain is Ribosomal RNA large subunit methyltransferase H from Listeria monocytogenes serotype 4b (strain CLIP80459).